The sequence spans 255 residues: 1-(5-phosphoribosyl)-5-[(5-phosphoribosylamino)methylideneamino] imidazole-4-carboxamide isomerase (255 aa).

Residue D8 is the Proton acceptor of the active site. The Proton donor role is filled by D129.

The protein belongs to the HisA/HisF family.

The protein localises to the cytoplasm. It carries out the reaction 1-(5-phospho-beta-D-ribosyl)-5-[(5-phospho-beta-D-ribosylamino)methylideneamino]imidazole-4-carboxamide = 5-[(5-phospho-1-deoxy-D-ribulos-1-ylimino)methylamino]-1-(5-phospho-beta-D-ribosyl)imidazole-4-carboxamide. It functions in the pathway amino-acid biosynthesis; L-histidine biosynthesis; L-histidine from 5-phospho-alpha-D-ribose 1-diphosphate: step 4/9. The protein is 1-(5-phosphoribosyl)-5-[(5-phosphoribosylamino)methylideneamino] imidazole-4-carboxamide isomerase of Prochlorococcus marinus (strain MIT 9515).